The chain runs to 785 residues: Mitochondrial intermediate peptidase (785 aa).

A mitochondrion-targeting transit peptide spans 1–26 (MLKVTTSRPWVCSRCVRRQVQSRRRL). The disordered stretch occupies residues 26–51 (LATASTQYRESRPVPVDNSAPGAKRD). His566 is a Zn(2+) binding site. Residue Glu567 is part of the active site. Zn(2+)-binding residues include His570 and His573.

The protein belongs to the peptidase M3 family. It depends on Zn(2+) as a cofactor.

It localises to the mitochondrion matrix. It carries out the reaction Release of an N-terminal octapeptide as second stage of processing of some proteins imported into the mitochondrion.. Cleaves proteins, imported into the mitochondrion, to their mature size. While most mitochondrial precursor proteins are processed to the mature form in one step by mitochondrial processing peptidase (MPP), the sequential cleavage by MIP of an octapeptide after initial processing by MPP is a required step for a subgroup of nuclear-encoded precursor proteins destined for the matrix or the inner membrane. The sequence is that of Mitochondrial intermediate peptidase (oct1) from Botryotinia fuckeliana (strain B05.10) (Noble rot fungus).